The sequence spans 84 residues: Small ribosomal subunit protein bS18 (84 aa).

It belongs to the bacterial ribosomal protein bS18 family. Part of the 30S ribosomal subunit. Forms a tight heterodimer with protein bS6.

Functionally, binds as a heterodimer with protein bS6 to the central domain of the 16S rRNA, where it helps stabilize the platform of the 30S subunit. This Clostridium kluyveri (strain NBRC 12016) protein is Small ribosomal subunit protein bS18.